Reading from the N-terminus, the 224-residue chain is ATP-dependent dethiobiotin synthetase BioD (224 aa).

14 to 19 (GIGKTV) lines the ATP pocket. Thr18 is a Mg(2+) binding site. Lys39 is an active-site residue. Ser43 is a binding site for substrate. ATP is bound by residues Asp56, 117-120 (EGVG), and 177-178 (NE). The Mg(2+) site is built by Asp56 and Glu117.

This sequence belongs to the dethiobiotin synthetase family. In terms of assembly, homodimer. Requires Mg(2+) as cofactor.

The protein localises to the cytoplasm. It catalyses the reaction (7R,8S)-7,8-diammoniononanoate + CO2 + ATP = (4R,5S)-dethiobiotin + ADP + phosphate + 3 H(+). It functions in the pathway cofactor biosynthesis; biotin biosynthesis; biotin from 7,8-diaminononanoate: step 1/2. Functionally, catalyzes a mechanistically unusual reaction, the ATP-dependent insertion of CO2 between the N7 and N8 nitrogen atoms of 7,8-diaminopelargonic acid (DAPA, also called 7,8-diammoniononanoate) to form a ureido ring. In Xanthomonas campestris pv. campestris (strain 8004), this protein is ATP-dependent dethiobiotin synthetase BioD.